The chain runs to 1119 residues: DNA-directed RNA polymerase D subunit 2b (1119 aa).

Mg(2+) is bound at residue Asp732. 4 residues coordinate Zn(2+): Cys1055, Cys1058, Cys1080, and Cys1083. Residues 1055–1083 form a C4-type zinc finger; that stretch reads CRKCKTYANVIERTPSSGRKIRGPYCRVC.

Belongs to the RNA polymerase beta chain family. As to quaternary structure, component of the RNA polymerase IVa and IVb (Pol IV) complexes.

It is found in the nucleus. It carries out the reaction RNA(n) + a ribonucleoside 5'-triphosphate = RNA(n+1) + diphosphate. In terms of biological role, DNA-dependent RNA polymerase catalyzes the transcription of DNA into RNA using the four ribonucleoside triphosphates as substrates. Second largest component of RNA polymerase IVa and IVb which mediate short-interfering RNAs (siRNA) accumulation and subsequent RNA-directed DNA methylation-dependent (RdDM) silencing of endogenous repeated sequences, including transposable largest subunit. Also required for full erasure of methylation elements. Required for intercellular RNA interference (RNAi) leading to systemic post-transcriptional gene silencing. This is DNA-directed RNA polymerase D subunit 2b (NRPD2b) from Arabidopsis thaliana (Mouse-ear cress).